We begin with the raw amino-acid sequence, 470 residues long: Adenosylhomocysteinase (470 aa).

Positions 61, 136, and 196 each coordinate substrate. 197–199 (TTT) contacts NAD(+). Lys-226 and Asp-230 together coordinate substrate. NAD(+) contacts are provided by residues Asn-231, 260-265 (GYGDVG), Glu-283, Asn-318, 339-341 (IGH), and Asn-384.

The protein belongs to the adenosylhomocysteinase family. NAD(+) serves as cofactor.

Its subcellular location is the cytoplasm. It catalyses the reaction S-adenosyl-L-homocysteine + H2O = L-homocysteine + adenosine. Its pathway is amino-acid biosynthesis; L-homocysteine biosynthesis; L-homocysteine from S-adenosyl-L-homocysteine: step 1/1. May play a key role in the regulation of the intracellular concentration of adenosylhomocysteine. The protein is Adenosylhomocysteinase of Aromatoleum aromaticum (strain DSM 19018 / LMG 30748 / EbN1) (Azoarcus sp. (strain EbN1)).